The following is a 251-amino-acid chain: Malonyl-[acyl-carrier protein] O-methyltransferase (251 aa).

This sequence belongs to the methyltransferase superfamily.

It catalyses the reaction malonyl-[ACP] + S-adenosyl-L-methionine = malonyl-[ACP] methyl ester + S-adenosyl-L-homocysteine. It participates in cofactor biosynthesis; biotin biosynthesis. In terms of biological role, converts the free carboxyl group of a malonyl-thioester to its methyl ester by transfer of a methyl group from S-adenosyl-L-methionine (SAM). It allows to synthesize pimeloyl-ACP via the fatty acid synthetic pathway. The chain is Malonyl-[acyl-carrier protein] O-methyltransferase from Salmonella typhimurium (strain LT2 / SGSC1412 / ATCC 700720).